The chain runs to 312 residues: Glyoxylate/hydroxypyruvate reductase A (312 aa).

Arg-227 is an active-site residue. The active-site Proton donor is the His-275.

This sequence belongs to the D-isomer specific 2-hydroxyacid dehydrogenase family. GhrA subfamily.

It is found in the cytoplasm. The enzyme catalyses glycolate + NADP(+) = glyoxylate + NADPH + H(+). It catalyses the reaction (R)-glycerate + NAD(+) = 3-hydroxypyruvate + NADH + H(+). It carries out the reaction (R)-glycerate + NADP(+) = 3-hydroxypyruvate + NADPH + H(+). Its function is as follows. Catalyzes the NADPH-dependent reduction of glyoxylate and hydroxypyruvate into glycolate and glycerate, respectively. This Salmonella paratyphi C (strain RKS4594) protein is Glyoxylate/hydroxypyruvate reductase A.